Reading from the N-terminus, the 103-residue chain is Histone H4 (103 aa).

Gly residues predominate over residues 1-14 (MSGRGKGGKGLGKG). The segment at 1–20 (MSGRGKGGKGLGKGGAKRHR) is disordered. An N6-acetyl-N6-methyllysine; alternate modification is found at Lys6. Lys6, Lys9, and Lys13 each carry N6-methyllysine; alternate. Lys13 is modified (N6-acetyl-N6-methyllysine; alternate). Residues 17-21 (KRHRK) mediate DNA binding. Lys92 is subject to N6-glutaryllysine.

Belongs to the histone H4 family. In terms of assembly, the nucleosome is a histone octamer containing two molecules each of H2A, H2B, H3 and H4 assembled in one H3-H4 heterotetramer and two H2A-H2B heterodimers. The octamer wraps approximately 147 bp of DNA. In terms of processing, glutarylation at Lys-92 (H4K91glu) destabilizes nucleosomes by promoting dissociation of the H2A-H2B dimers from nucleosomes.

The protein localises to the nucleus. It localises to the chromosome. Functionally, core component of nucleosome. Nucleosomes wrap and compact DNA into chromatin, limiting DNA accessibility to the cellular machineries which require DNA as a template. Histones thereby play a central role in transcription regulation, DNA repair, DNA replication and chromosomal stability. DNA accessibility is regulated via a complex set of post-translational modifications of histones, also called histone code, and nucleosome remodeling. The sequence is that of Histone H4 (HHF1) from Mycosarcoma maydis (Corn smut fungus).